The primary structure comprises 708 residues: Nicastrin (708 aa).

Positions 1–34 (MATARGGSGPDPGSRGLLLLSFSVVLAGLCGGNS) are cleaved as a signal peptide. The Lumenal portion of the chain corresponds to 35-668 (VERKIYIPLN…IFLIASKELE (634 aa)). Residues asparagine 44, asparagine 54, and asparagine 128 are each glycosylated (N-linked (GlcNAc...) asparagine). Cysteine 49 and cysteine 61 are joined by a disulfide. Residues cysteine 139 and cysteine 158 are joined by a disulfide bond. Asparagine 186 and asparagine 203 each carry an N-linked (GlcNAc...) asparagine glycan. 2 cysteine pairs are disulfide-bonded: cysteine 194–cysteine 212 and cysteine 229–cysteine 247. N-linked (GlcNAc...) asparagine glycosylation is found at asparagine 263, asparagine 386, asparagine 434, asparagine 463, asparagine 507, asparagine 529, asparagine 561, asparagine 572, asparagine 579, asparagine 593, and asparagine 611. An intrachain disulfide couples cysteine 585 to cysteine 619. The helical transmembrane segment at 669 to 689 (FITLIVGFSILVFSLIVTYCI) threads the bilayer. Topologically, residues 690-708 (NAKADVLFVAPREPGAVSY) are cytoplasmic.

Belongs to the nicastrin family. Component of the gamma-secretase complex. The functional gamma-secretase complex is composed of at least four polypeptides: a presenilin homodimer (PSEN1 or PSEN2), nicastrin (NCSTN), APH1 (APH1A or APH1B) and PEN2. Binds to proteolytic processed C-terminal fragments C83 and C99 of the amyloid precursor protein (APP). Interacts with PSEN1 and PSEN2. Post-translationally, N-glycosylated.

It is found in the membrane. It localises to the cytoplasmic vesicle membrane. The protein localises to the melanosome. Its function is as follows. Essential subunit of the gamma-secretase complex, an endoprotease complex that catalyzes the intramembrane cleavage of integral membrane proteins such as Notch receptors and APP (amyloid-beta precursor protein). The gamma-secretase complex plays a role in Notch and Wnt signaling cascades and regulation of downstream processes via its role in processing key regulatory proteins, and by regulating cytosolic CTNNB1 levels. The chain is Nicastrin (Ncstn) from Rattus norvegicus (Rat).